The following is a 144-amino-acid chain: Interleukin-9 (144 aa).

The first 18 residues, 1-18, serve as a signal peptide directing secretion; sequence MLLAMVLTSALLLCSVAG. Position 19 is a pyrrolidone carboxylic acid (Gln19). Asn50, Asn63, Asn78, and Asn114 each carry an N-linked (GlcNAc...) asparagine glycan.

This sequence belongs to the IL-7/IL-9 family. As to quaternary structure, interacts with IL9R. Interacts with IL2RG.

Its subcellular location is the secreted. In terms of biological role, multifunctional cytokine secreted mainly by T-helper 2 lymphocytes and also mast cells or NKT cells that plays important roles in the immune response against parasites. Affects intestinal epithelial permeability and adaptive immunity. In addition, induces the differentiation of specific T-cell subsets such as IL-17 producing helper T-cells (TH17) and also proliferation and differentiation of mast cells. Mechanistically, exerts its biological effects through a receptor composed of IL9R subunit and a signal transducing subunit IL2RG. Receptor stimulation results in the rapid activation of JAK1 and JAK3 kinase activities leading to STAT1, STAT3 and STAT5-mediated transcriptional programs. Induction of differentiation genes seems to be mediated by STAT1 alone, while protection of cells from apoptosis depends on STAT3 and STAT5. The protein is Interleukin-9 (IL9) of Homo sapiens (Human).